The primary structure comprises 520 residues: Amine oxidase [flavin-containing] B (520 aa).

Position 2 is an N-acetylserine (serine 2). The Cytoplasmic segment spans residues 2-489 (SNKSDVIVVG…TFLERHLPSV (488 aa)). An N6-acetyllysine mark is found at lysine 52 and lysine 248. S-8alpha-FAD cysteine is present on cysteine 397. A helical; Anchor for type IV membrane protein transmembrane segment spans residues 490 to 516 (PGLLKLFGLTTILSATALGFLAHKRGL). The Mitochondrial intermembrane portion of the chain corresponds to 517–520 (FVHF).

Belongs to the flavin monoamine oxidase family. As to quaternary structure, monomer, homo- or heterodimer (containing two subunits of similar size). Each subunit contains a covalently bound flavin. Enzymatically active as monomer. FAD serves as cofactor.

The protein localises to the mitochondrion outer membrane. The catalysed reaction is a secondary aliphatic amine + O2 + H2O = a primary amine + an aldehyde + H2O2. The enzyme catalyses (R)-adrenaline + O2 + H2O = (R)-3,4-dihydroxymandelaldehyde + methylamine + H2O2. It catalyses the reaction a primary methyl amine + O2 + H2O = an aldehyde + H2O2 + NH4(+). It carries out the reaction benzylamine + O2 + H2O = benzaldehyde + H2O2 + NH4(+). The catalysed reaction is dopamine + O2 + H2O = 3,4-dihydroxyphenylacetaldehyde + H2O2 + NH4(+). The enzyme catalyses tyramine + O2 + H2O = (4-hydroxyphenyl)acetaldehyde + H2O2 + NH4(+). It catalyses the reaction (R)-noradrenaline + O2 + H2O = (R)-3,4-dihydroxymandelaldehyde + H2O2 + NH4(+). It carries out the reaction 2-phenylethylamine + O2 + H2O = 2-phenylacetaldehyde + H2O2 + NH4(+). The catalysed reaction is N-acetylputrescine + O2 + H2O = 4-acetamidobutanal + H2O2 + NH4(+). Its function is as follows. Catalyzes the oxidative deamination of primary and some secondary amines such as neurotransmitters, and exogenous amines including the tertiary amine, neurotoxin 1-methyl-4-phenyl-1,2,3,6-tetrahydropyridine (MPTP), with concomitant reduction of oxygen to hydrogen peroxide and participates in the metabolism of neuroactive and vasoactive amines in the central nervous system and peripheral tissues. Preferentially degrades benzylamine and phenylethylamine. The chain is Amine oxidase [flavin-containing] B from Mus musculus (Mouse).